Here is a 168-residue protein sequence, read N- to C-terminus: Transcriptional regulator MraZ (168 aa).

2 SpoVT-AbrB domains span residues 8–51 and 90–140; these read EYNQ…GGDR and ALNM…KADT.

It belongs to the MraZ family. In terms of assembly, forms oligomers.

Its subcellular location is the cytoplasm. The protein resides in the nucleoid. In Cereibacter sphaeroides (strain ATCC 17025 / ATH 2.4.3) (Rhodobacter sphaeroides), this protein is Transcriptional regulator MraZ.